Consider the following 406-residue polypeptide: RILP-like protein 1 (406 aa).

Phosphoserine is present on serine 7. The RH1 domain occupies 10–97 (AALSALEKNV…RVERMDRIEK (88 aa)). Cysteine 47 bears the S-nitrosocysteine mark. Residues 76–258 (ELDELRLELD…KLRERLQGEH (183 aa)) are a coiled coil. Disordered stretches follow at residues 255–280 (QGEH…ESIS) and 330–354 (EIEE…QPES). Serine 259 carries the post-translational modification Phosphoserine. The span at 262–280 (GEEEEAEIQPQPDGEESIS) shows a compositional bias: acidic residues. An RH2 domain is found at 294-359 (RPRFTLQELR…PQPESGIKRL (66 aa)).

Belongs to the RILPL family. Interacts (when S-nitrosylated) with GAPDH. Interacts with RAB8A; interaction is dependent on the phosphorylation of 'Thr-72' of RAB8A. Interacts with RAB10 and RAB12; the interaction is dependent on the phosphorylation of 'Thr-73' of RAB10, and 'Ser-105' of RAB12. In terms of processing, S-nitrosylation is required for the interaction with GAPDH.

Its subcellular location is the cytoplasm. It is found in the cytosol. The protein resides in the cell projection. It localises to the cilium. The protein localises to the cytoskeleton. Its subcellular location is the microtubule organizing center. It is found in the centrosome. The protein resides in the centriole. In terms of biological role, neuroprotective protein, which acts by sequestring GAPDH in the cytosol and prevent the apoptotic function of GAPDH in the nucleus. Competes with SIAH1 for binding GAPDH. Does not regulate lysosomal morphology and distribution. Plays a role in the regulation of cell shape and polarity. Plays a role in cellular protein transport, including protein transport away from primary cilia. Binds to RAB10 following LRRK2-mediated RAB10 phosphorylation which leads to inhibition of ciliogenesis. This chain is RILP-like protein 1 (Rilpl1), found in Mus musculus (Mouse).